The sequence spans 148 residues: 3-dehydroquinate dehydratase (148 aa).

Tyrosine 23 functions as the Proton acceptor in the catalytic mechanism. Residues asparagine 74, histidine 80, and aspartate 87 each contribute to the substrate site. Histidine 100 (proton donor) is an active-site residue. Residues 101 to 102 (IS) and arginine 111 each bind substrate.

The protein belongs to the type-II 3-dehydroquinase family. In terms of assembly, homododecamer.

The enzyme catalyses 3-dehydroquinate = 3-dehydroshikimate + H2O. Its pathway is metabolic intermediate biosynthesis; chorismate biosynthesis; chorismate from D-erythrose 4-phosphate and phosphoenolpyruvate: step 3/7. Functionally, catalyzes a trans-dehydration via an enolate intermediate. The chain is 3-dehydroquinate dehydratase from Halothermothrix orenii (strain H 168 / OCM 544 / DSM 9562).